A 129-amino-acid chain; its full sequence is Aspartate 1-decarboxylase (129 aa).

Ser-25 acts as the Schiff-base intermediate with substrate; via pyruvic acid in catalysis. Residue Ser-25 is modified to Pyruvic acid (Ser). Thr-57 serves as a coordination point for substrate. Tyr-58 serves as the catalytic Proton donor. 73 to 75 (GAA) is a substrate binding site.

Belongs to the PanD family. Heterooctamer of four alpha and four beta subunits. Pyruvate serves as cofactor. In terms of processing, is synthesized initially as an inactive proenzyme, which is activated by self-cleavage at a specific serine bond to produce a beta-subunit with a hydroxyl group at its C-terminus and an alpha-subunit with a pyruvoyl group at its N-terminus.

It localises to the cytoplasm. The enzyme catalyses L-aspartate + H(+) = beta-alanine + CO2. It functions in the pathway cofactor biosynthesis; (R)-pantothenate biosynthesis; beta-alanine from L-aspartate: step 1/1. In terms of biological role, catalyzes the pyruvoyl-dependent decarboxylation of aspartate to produce beta-alanine. This is Aspartate 1-decarboxylase from Hydrogenovibrio crunogenus (strain DSM 25203 / XCL-2) (Thiomicrospira crunogena).